The primary structure comprises 417 residues: UDP-N-acetylglucosamine 1-carboxyvinyltransferase (417 aa).

22 to 23 (KN) contributes to the phosphoenolpyruvate binding site. Arg92 is a UDP-N-acetyl-alpha-D-glucosamine binding site. Cys116 serves as the catalytic Proton donor. Residue Cys116 is modified to 2-(S-cysteinyl)pyruvic acid O-phosphothioketal. 2 residues coordinate UDP-N-acetyl-alpha-D-glucosamine: Asp304 and Ile326.

This sequence belongs to the EPSP synthase family. MurA subfamily.

The protein resides in the cytoplasm. The catalysed reaction is phosphoenolpyruvate + UDP-N-acetyl-alpha-D-glucosamine = UDP-N-acetyl-3-O-(1-carboxyvinyl)-alpha-D-glucosamine + phosphate. It participates in cell wall biogenesis; peptidoglycan biosynthesis. Cell wall formation. Adds enolpyruvyl to UDP-N-acetylglucosamine. The sequence is that of UDP-N-acetylglucosamine 1-carboxyvinyltransferase from Geobacter metallireducens (strain ATCC 53774 / DSM 7210 / GS-15).